A 151-amino-acid chain; its full sequence is D-aminoacyl-tRNA deacylase (151 aa).

A Gly-cisPro motif, important for rejection of L-amino acids motif is present at residues 137 to 138 (GP).

Belongs to the DTD family. As to quaternary structure, homodimer.

It localises to the cytoplasm. It carries out the reaction glycyl-tRNA(Ala) + H2O = tRNA(Ala) + glycine + H(+). It catalyses the reaction a D-aminoacyl-tRNA + H2O = a tRNA + a D-alpha-amino acid + H(+). Its function is as follows. An aminoacyl-tRNA editing enzyme that deacylates mischarged D-aminoacyl-tRNAs. Also deacylates mischarged glycyl-tRNA(Ala), protecting cells against glycine mischarging by AlaRS. Acts via tRNA-based rather than protein-based catalysis; rejects L-amino acids rather than detecting D-amino acids in the active site. By recycling D-aminoacyl-tRNA to D-amino acids and free tRNA molecules, this enzyme counteracts the toxicity associated with the formation of D-aminoacyl-tRNA entities in vivo and helps enforce protein L-homochirality. The chain is D-aminoacyl-tRNA deacylase from Listeria monocytogenes serotype 4a (strain HCC23).